The primary structure comprises 159 residues: Cytochrome c-type biogenesis protein CcmE (159 aa).

Over 1–8 (MNLRRKNR) the chain is Cytoplasmic. A helical; Signal-anchor for type II membrane protein transmembrane segment spans residues 9–29 (LWVVCAVLAGLGLTTALVLYA). The Periplasmic segment spans residues 30 to 159 (LRANIDLFYT…PQRADKDTSS (130 aa)). The segment at 129-159 (KHDENYTPPEVEKAMQENHRRPQRADKDTSS) is disordered. The heme site is built by histidine 130 and tyrosine 134.

This sequence belongs to the CcmE/CycJ family.

The protein localises to the cell inner membrane. Heme chaperone required for the biogenesis of c-type cytochromes. Transiently binds heme delivered by CcmC and transfers the heme to apo-cytochromes in a process facilitated by CcmF and CcmH. In Salmonella typhimurium (strain LT2 / SGSC1412 / ATCC 700720), this protein is Cytochrome c-type biogenesis protein CcmE.